Here is a 100-residue protein sequence, read N- to C-terminus: MDKSKRPFRKSKRSFRRRLPPIGSGDRIDYRNMSLISQFISEQGKILSRRVNRLTLKQQRLITIAIKQARILSSLPFLNNEKQFERTESIPRTTGPRTRK.

The segment covering 1 to 19 (MDKSKRPFRKSKRSFRRRL) has biased composition (basic residues). The tract at residues 1-23 (MDKSKRPFRKSKRSFRRRLPPIG) is disordered.

It belongs to the bacterial ribosomal protein bS18 family. As to quaternary structure, part of the 30S ribosomal subunit.

The protein localises to the plastid. The protein resides in the chloroplast. In Calycanthus floridus var. glaucus (Eastern sweetshrub), this protein is Small ribosomal subunit protein bS18c.